We begin with the raw amino-acid sequence, 125 residues long: Small ribosomal subunit protein uS12c (125 aa).

It belongs to the universal ribosomal protein uS12 family. In terms of assembly, part of the 30S ribosomal subunit.

It localises to the plastid. The protein resides in the chloroplast. Its function is as follows. With S4 and S5 plays an important role in translational accuracy. Located at the interface of the 30S and 50S subunits. In Oltmannsiellopsis viridis (Marine flagellate), this protein is Small ribosomal subunit protein uS12c (rps12).